Reading from the N-terminus, the 661-residue chain is Potassium voltage-gated channel subfamily KQT member 1 (661 aa).

2 disordered regions span residues 1 to 29 (MAAA…ESAG) and 42 to 88 (ESGP…SLDP). Residues 1-119 (MAAASTPPRA…YNFLERPTGW (119 aa)) are Cytoplasmic-facing. A Phosphoserine; by PKA modification is found at Ser27. Pro residues predominate over residues 54 to 85 (VSPPSAPEPAPPASPASPAPPAADQGPQPPVS). Residues 120–141 (KCFAYHFTVFLIVLVCLIFSVL) form a helical membrane-spanning segment. The Extracellular segment spans residues 142–152 (STIEQYATLAT). A helical transmembrane segment spans residues 153–175 (GTLFWMEIVLVVFFGTEYVVRLW). The Cytoplasmic segment spans residues 176-191 (SAGCRSKYVGLWGRLR). A helical transmembrane segment spans residues 192-217 (FARKPISIIDLIVVVASMVVLCVGSK). Over 218–225 (GQVFATSA) the chain is Extracellular. The helical; Voltage-sensor transmembrane segment at 226–241 (IRGIRFLQILRMLHVD) threads the bilayer. Residues 237 to 245 (MLHVDRQGG) are interaction with KCNE3. Residues 242–259 (RQGGTWRLLGSVVFIHRQ) lie on the Cytoplasmic side of the membrane. Position 243 (Gln243) interacts with a 1,2-diacyl-sn-glycero-3-phospho-(1D-myo-inositol-4,5-bisphosphate). Residues 260–282 (ELITTLYIGFLGLIFSSYFVYLA) form a helical membrane-spanning segment. Residues 283 to 298 (EKDAVNESGRVEFGSY) lie on the Extracellular side of the membrane. An N-linked (GlcNAc...) asparagine glycan is attached at Asn288. The segment at residues 299–319 (ADALWWGVVTVTTIGYGDKVP) is an intramembrane region (pore-forming). Over 320-321 (QT) the chain is Extracellular. A helical membrane pass occupies residues 322-347 (WVGKTIASCFSVFAISFFALPAGILG). Residues 348-661 (SGFALKVQQK…VPRRDPEEGS (314 aa)) are Cytoplasmic-facing. The interval 369–381 (AAASLIQTAWRCY) is interaction with CALM. Ser406 and Ser408 each carry phosphoserine. Residues 514–528 (KVIRRMQYFVAKKKF) are interaction with CALM; calcium-dependent. The interaction with KCNE1 C-terminus stretch occupies residues 534–571 (PYDVRDVIEQYSQGHLNLMVRIKELQRRLDQSIGKPSL). A coiled-coil region spans residues 584–620 (SNSIGARLNRVEDKVTQLDQRLVLIADMLQQLLALHQ). The interval 587–615 (IGARLNRVEDKVTQLDQRLVLIADMLQQL) is interaction with AKAP9. The C-terminal assembly domain (tetramerization) stretch occupies residues 588–619 (GARLNRVEDKVTQLDQRLVLIADMLQQLLALH). A disordered region spans residues 624–661 (HGGAHPAQARDGDPADPELFLPTYEQLTVPRRDPEEGS).

This sequence belongs to the potassium channel family. KQT (TC 1.A.1.15) subfamily. Kv7.1/KCNQ1 sub-subfamily. Tetramer. Heterotetramer with KCNE1; targets to the membrane raft. Interacts (via C-terminus) with CALM; forms a heterooctameric structure (with 4:4 KCNQ1:CALM stoichiometry) in a calcium-independent manner. Interacts with AKAP9; targets protein kinase A (PKA) catalytic and regulatory subunits and protein phosphatase 1 (PP1) to the KCNQ1-KCNE1 complex, allowing PKA-mediated phosphorylation and increase of delayed rectifier potassium channel activity. Interacts with KCNE2; form a heterooligomer complex that targets to the membrane raft and leading to currents with an apparently instantaneous activation, a rapid deactivation process and a linear current-voltage relationship and decreases the amplitude of the outward current. Interacts with AP2M1; mediates estrogen-induced internalization via clathrin-coated vesicles. Interacts with NEDD4L; promotes internalization and decreases I(Ks) currents. Interacts with USP2; counteracts the NEDD4L-specific down-regulation of I(Ks) and restore plasma membrane localization. Heterotetramer with KCNQ5; has a voltage-gated potassium channel activity. Interacts with KCNE3; four KCNE3 molecules are bound to one KCNQ1 tetramer (4:4 KCNQ1:KCNE3 stoichiometry); alters membrane raft localization; affects KCNQ1 structure and gating properties. Interacts with KCNE4; impairs KCNQ1 localization in lipid rafts and inhibits voltage-gated potassium channel activity. Interacts with KCNE5; impairs KCNQ1 localization in lipid rafts and only conducts current upon strong and continued depolarization. Interacts with SLC5A3; forms coregulatory channel-transporter complexes that modulate Na(+)-coupled myo-inositol influx through the transporter. In terms of processing, phosphorylation at Ser-27 by PKA; increases delayed rectifier potassium channel activity of the KCNQ1-KCNE1 complex through a macromolecular complex that includes PKA, PP1, and the targeting protein AKAP9. Ubiquitinated by NEDD4L; promotes internalization. The ubiquitinylated form is internalized through a clathrin-mediated endocytosis by interacting with AP2M1 and is recycled back to the cell membrane via RAB4A and RAB11A. Post-translationally, deubiquitinated by USP2; counteracts the NEDD4L-specific down-regulation of I(Ks) and restores the membrane localization.

The protein resides in the cell membrane. Its subcellular location is the cytoplasmic vesicle membrane. It is found in the early endosome. The protein localises to the membrane raft. It localises to the endoplasmic reticulum. The protein resides in the basolateral cell membrane. Its subcellular location is the apical cell membrane. The catalysed reaction is K(+)(in) = K(+)(out). PIP2 molecule is essential to activate KCNQ channels by inducing the coupling of the voltage-sensing domain (VSD) and the pore-forming domain (PD). Upon channel activation, PIP2 disrupts the VSD-calmodulin/CALM interactions, causing the release of CALM from the VSD which triggers the opening of the gate. Calcium potentiates KCNQ1 channel current through calcium-bound CALM. Calcium-bound CALM competes with PIP2 to stabilize the channel open state. Its function is as follows. Pore-forming subunit of the voltage-gated potassium (Kv) channel involved in the regulation of cardiomyocyte excitability and important in normal development and functions of myocardium, inner ear, stomach and colon. Associates with KCNE beta subunits that modulates current kinetics. Induces a voltage-dependent by rapidly activating and slowly deactivating potassium-selective outward current. Also promotes a delayed voltage activated potassium current showing outward rectification characteristic. During beta-adrenergic receptor stimulation participates in cardiac repolarization by associating with KCNE1 to form the I(Ks) cardiac potassium current that increases the amplitude and slows down the activation kinetics of outward potassium current I(Ks). Muscarinic agonist oxotremorine-M strongly suppresses KCNQ1/KCNE1 current. When associated with KCNE3, forms the potassium channel that is important for cyclic AMP-stimulated intestinal secretion of chloride ions. This interaction with KCNE3 is reduced by 17beta-estradiol, resulting in the reduction of currents. During conditions of increased substrate load, maintains the driving force for proximal tubular and intestinal sodium ions absorption, gastric acid secretion, and cAMP-induced jejunal chloride ions secretion. Allows the provision of potassium ions to the luminal membrane of the secretory canaliculus in the resting state as well as during stimulated acid secretion. When associated with KCNE2, forms a heterooligomer complex leading to currents with an apparently instantaneous activation, a rapid deactivation process and a linear current-voltage relationship and decreases the amplitude of the outward current. When associated with KCNE4, inhibits voltage-gated potassium channel activity. When associated with KCNE5, this complex only conducts current upon strong and continued depolarization. Also forms a heterotetramer with KCNQ5 that has a voltage-gated potassium channel activity. Binds with phosphatidylinositol 4,5-bisphosphate. KCNQ1-KCNE2 channel associates with Na(+)-coupled myo-inositol symporter in the apical membrane of choroid plexus epithelium and regulates the myo-inositol gradient between blood and cerebrospinal fluid with an impact on neuron excitability. This Oryctolagus cuniculus (Rabbit) protein is Potassium voltage-gated channel subfamily KQT member 1.